The sequence spans 455 residues: Enolase (455 aa).

(2R)-2-phosphoglycerate is bound at residue glutamine 166. Residue glutamate 208 is the Proton donor of the active site. 3 residues coordinate Mg(2+): aspartate 249, glutamate 311, and aspartate 338. Residues lysine 363, arginine 392, serine 393, and lysine 414 each contribute to the (2R)-2-phosphoglycerate site. Lysine 363 serves as the catalytic Proton acceptor.

The protein belongs to the enolase family. The cofactor is Mg(2+).

The protein resides in the cytoplasm. It localises to the secreted. Its subcellular location is the cell surface. The catalysed reaction is (2R)-2-phosphoglycerate = phosphoenolpyruvate + H2O. It participates in carbohydrate degradation; glycolysis; pyruvate from D-glyceraldehyde 3-phosphate: step 4/5. In terms of biological role, catalyzes the reversible conversion of 2-phosphoglycerate (2-PG) into phosphoenolpyruvate (PEP). It is essential for the degradation of carbohydrates via glycolysis. In Mycoplasma mobile (strain ATCC 43663 / 163K / NCTC 11711) (Mesomycoplasma mobile), this protein is Enolase.